The chain runs to 267 residues: Small ribosomal subunit protein uS2 (267 aa).

Positions 234–267 are disordered; that stretch reads DNAEEELAEAISQEEPSAAEELPDDMADNENEFE. Acidic residues predominate over residues 250–267; that stretch reads SAAEELPDDMADNENEFE.

It belongs to the universal ribosomal protein uS2 family.

This Dichelobacter nodosus (strain VCS1703A) protein is Small ribosomal subunit protein uS2.